The following is a 464-amino-acid chain: Na(+)/H(+) antiporter NhaA 2 (464 aa).

Helical transmembrane passes span 53–73 (VGGI…NSPW), 96–116 (LTLG…VVGL), 134–154 (ALPI…FVLV), 165–185 (GWAI…AVIS), 195–215 (FLLT…AVFY), 219–239 (IKAW…VCAQ), 257–277 (VLVH…GFAV), 313–333 (IAIP…LSGL), 340–360 (PITL…ILVT), 378–398 (WVDV…SLLI), and 412–432 (FVKI…AIVL).

It belongs to the NhaA Na(+)/H(+) (TC 2.A.33) antiporter family.

It localises to the cell membrane. It catalyses the reaction Na(+)(in) + 2 H(+)(out) = Na(+)(out) + 2 H(+)(in). Functionally, na(+)/H(+) antiporter that extrudes sodium in exchange for external protons. The chain is Na(+)/H(+) antiporter NhaA 2 from Mycolicibacterium vanbaalenii (strain DSM 7251 / JCM 13017 / BCRC 16820 / KCTC 9966 / NRRL B-24157 / PYR-1) (Mycobacterium vanbaalenii).